A 107-amino-acid chain; its full sequence is MMEGLGEHSTAGEMGPLLGAVAATASPQSLMEYSSDADFIESLPLVVKYRVYTLKKLQAKCAVLEAKYLREFHSVERKFATIYGPLLEKRRQITNALYEPTKEECER.

Belongs to the nucleosome assembly protein (NAP) family.

This Homo sapiens (Human) protein is Putative nucleosome assembly protein 1-like 6.